Consider the following 226-residue polypeptide: uncharacterized protein (226 aa).

This sequence to L.innocua lin2408 and lin2600.

This is an uncharacterized protein from Listeria innocua serovar 6a (strain ATCC BAA-680 / CLIP 11262).